The following is a 424-amino-acid chain: Serine/threonine-protein kinase H1 (424 aa).

Gly2 is lipidated: N-myristoyl glycine. Cys3 carries S-palmitoyl cysteine lipidation. Residues 56–80 (SQYAHPCPGPPTAGHTEPPSEPPRR) form a disordered region. Positions 98-355 (YDIKALIGRG…ALQALRHPWV (258 aa)) constitute a Protein kinase domain. ATP is bound by residues 104–112 (IGRGSFSRV) and Lys127. The Proton acceptor role is filled by Asp218. The segment at 378–407 (RASSRCQSTKSAQSTRSSRSTRSNKSRRVR) is disordered. Phosphoserine; by autocatalysis occurs at positions 380 and 381. The segment covering 385–398 (STKSAQSTRSSRST) has biased composition (low complexity).

It belongs to the protein kinase superfamily. CAMK Ser/Thr protein kinase family. Homodimer. Autophosphorylated on serine residues. Post-translationally, myristoylated. Required for membrane association. Prerequisite for palmitoylation to occur. In terms of processing, palmitoylated. As to expression, expressed in all tissues and cell lines tested with the highest level of abundance in testis.

The protein resides in the golgi apparatus. Its subcellular location is the cytoplasm. It is found in the cytoskeleton. The protein localises to the microtubule organizing center. It localises to the centrosome. The protein resides in the nucleus speckle. Its subcellular location is the endoplasmic reticulum membrane. It is found in the cell membrane. The enzyme catalyses L-seryl-[protein] + ATP = O-phospho-L-seryl-[protein] + ADP + H(+). It catalyses the reaction L-threonyl-[protein] + ATP = O-phospho-L-threonyl-[protein] + ADP + H(+). Its activity is regulated as follows. Activity depends on Ca(2+) concentration. Serine/threonine protein kinase that may be involved in the regulation of pre-mRNA processing. It may phosphorylate components of nuclear splice factor compartments (SFC), such as non-snRNP splicing factors containing a serine/arginine-rich domain (SR proteins). Reversible phosphorylation of SR proteins may cause their release into the nucleoplasm and change their local concentration, thereby influencing alternative splicing. In Homo sapiens (Human), this protein is Serine/threonine-protein kinase H1 (PSKH1).